A 128-amino-acid polypeptide reads, in one-letter code: Secreted RxLR effector protein 57 (128 aa).

The N-terminal stretch at 1-31 (MHRKRLRVVLSATLLDLITCVQLMLDPLVRS) is a signal peptide. The RxLR signature appears at 58–61 (RILR).

It belongs to the RxLR effector family.

The protein localises to the secreted. Its subcellular location is the host nucleus. It is found in the host cytoplasm. Functionally, secreted effector that completely suppresses the host cell death induced by cell death-inducing proteins. The sequence is that of Secreted RxLR effector protein 57 from Plasmopara viticola (Downy mildew of grapevine).